Here is a 1905-residue protein sequence, read N- to C-terminus: Low-density lipoprotein receptor-related protein 4 (1905 aa).

Residues 1 to 20 (MRRWWGALLLGALLCAHGTA) form the signal peptide. The Extracellular portion of the chain corresponds to 21–1723 (SNLECACGRS…VPAAPGEGLH (1703 aa)). LDL-receptor class A domains are found at residues 26-67 (ACGR…DGCT), 70-106 (TCSPLDFHCDNGKCIRRSWVCDGDNDCEDDSDEQDCP), 109-144 (ECEEDEFPCQNGYCIRSLWHCDGDNDCGDNSDEQCD), 147-183 (KCSDKEFRCSDGSCIAEHWYCDGDTDCKDGSDEESCP), 190-226 (PCNLEEFQCAYGRCILDIYHCDGDDDCGDWSDESDCS), 230-266 (PCRSGEFMCDSGLCVNAGWRCDGDADCDDQSDERNCT), 269-305 (MCTAEQFRCRSGRCVRLSWRCDGEDDCADNSDEENCE), and 311-350 (QCASDQFLCWNGRCIGQRKLCNGVNDCGDNSDESPQQNCR). 30 disulfide bridges follow: cysteine 27–cysteine 44, cysteine 34–cysteine 57, cysteine 51–cysteine 66, cysteine 71–cysteine 83, cysteine 78–cysteine 96, cysteine 90–cysteine 105, cysteine 110–cysteine 122, cysteine 117–cysteine 135, cysteine 129–cysteine 143, cysteine 148–cysteine 160, cysteine 155–cysteine 173, cysteine 167–cysteine 182, cysteine 191–cysteine 203, cysteine 198–cysteine 216, cysteine 210–cysteine 225, cysteine 231–cysteine 243, cysteine 238–cysteine 256, cysteine 250–cysteine 265, cysteine 270–cysteine 282, cysteine 277–cysteine 295, cysteine 289–cysteine 304, cysteine 312–cysteine 324, cysteine 319–cysteine 337, cysteine 331–cysteine 349, cysteine 358–cysteine 369, cysteine 365–cysteine 378, cysteine 380–cysteine 393, cysteine 399–cysteine 409, cysteine 405–cysteine 418, and cysteine 420–cysteine 433. N-linked (GlcNAc...) asparagine glycosylation occurs at asparagine 264. In terms of domain architecture, EGF-like 1; atypical spans 354–394 (GEENCNVNNGGCAQKCQMIRGAVQCTCHTGYRLTEDGRTCQ). In terms of domain architecture, EGF-like 2; calcium-binding spans 395–434 (DVNECAEEGYCSQGCTNSEGAFQCWCEAGYELRPDRRSCK). 5 LDL-receptor class B repeats span residues 480-522 (ELVF…DWVH), 523-565 (DKLY…HPME), 566-609 (GTIY…DYAG), 610-652 (RRMY…FEDS), and 653-693 (LYWT…LHPQ). An N-linked (GlcNAc...) asparagine glycan is attached at asparagine 498. Positions 698-737 (GKNRCGDNNGGCTHLCLPSGQNYTCACPTGFRKINSHACA) constitute an EGF-like 3 domain. 3 disulfides stabilise this stretch: cysteine 702-cysteine 713, cysteine 709-cysteine 722, and cysteine 724-cysteine 736. Asparagine 719 carries N-linked (GlcNAc...) asparagine glycosylation. 5 LDL-receptor class B repeats span residues 785 to 827 (DHVY…DWVT), 828 to 870 (NKLY…EPMG), 871 to 914 (GYMY…DYGS), 915 to 956 (QRLY…LYGQ), and 957 to 998 (RIYW…FHRQ). A glycan (N-linked (GlcNAc...) asparagine) is linked at asparagine 901. Asparagine 1077 is a glycosylation site (N-linked (GlcNAc...) asparagine). 10 LDL-receptor class B repeats span residues 1093–1135 (GKVY…DAIG), 1136–1178 (RKVY…YHEM), 1179–1222 (GFMY…DKTS), 1223–1263 (SQLL…LLDS), 1264–1306 (YIYW…DRAQ), 1397–1439 (GKVY…DWVA), 1440–1482 (RNLY…FPRK), 1483–1526 (GYLF…DYDT), 1527–1568 (RRIY…QDRW), and 1569–1610 (IYWT…SPQR). 2 N-linked (GlcNAc...) asparagine glycosylation sites follow: asparagine 1415 and asparagine 1467. The tract at residues 1659 to 1696 (PRATSLNEKSPVLPNTLPTTLHSSTTRTRTSPEGAEGR) is disordered. A compositionally biased stretch (low complexity) spans 1671–1690 (LPNTLPTTLHSSTTRTRTSP). Residues 1724–1746 (VSYAVGGLLSVLLILLVTAALML) traverse the membrane as a helical segment. The Cytoplasmic segment spans residues 1747–1905 (YRHRKSKFTD…ERKLSSESQV (159 aa)). The tract at residues 1853 to 1905 (SSGSLDDTETEQLLQEEQSECSSVHTATTPERRGSLPDTGWKHERKLSSESQV) is disordered. The segment covering 1872-1881 (ECSSVHTATT) has biased composition (polar residues). Basic and acidic residues predominate over residues 1882 to 1905 (PERRGSLPDTGWKHERKLSSESQV).

Belongs to the LDLR family. Homooligomer. Interacts with MUSK; the heterodimer forms an AGRIN receptor complex that binds AGRIN resulting in activation of MUSK. Interacts (via the extracellular domain) with SOST; the interaction facilitates the inhibition of Wnt signaling. Interacts with MESD; the interaction promotes glycosylation of LRP4 and its cell-surface expression. Post-translationally, N-glycosylation is required for cell surface location. Expressed in different regions of the brain, mainly in the olfactory bulb, at lower level in the cerebral cortex and hippocampus.

The protein localises to the cell membrane. Its function is as follows. Mediates SOST-dependent inhibition of bone formation. Functions as a specific facilitator of SOST-mediated inhibition of Wnt signaling. Plays a key role in the formation and the maintenance of the neuromuscular junction (NMJ), the synapse between motor neuron and skeletal muscle. Directly binds AGRIN and recruits it to the MUSK signaling complex. Mediates the AGRIN-induced phosphorylation of MUSK, the kinase of the complex. The activation of MUSK in myotubes induces the formation of NMJ by regulating different processes including the transcription of specific genes and the clustering of AChR in the postsynaptic membrane. Alternatively, may be involved in the negative regulation of the canonical Wnt signaling pathway, being able to antagonize the LRP6-mediated activation of this pathway. More generally, has been proposed to function as a cell surface endocytic receptor binding and internalizing extracellular ligands for degradation by lysosomes. Plays an essential role in the process of digit differentiation. The chain is Low-density lipoprotein receptor-related protein 4 (Lrp4) from Rattus norvegicus (Rat).